The following is a 342-amino-acid chain: Paired box protein Pax-9 (342 aa).

A DNA-binding region (paired) is located at residues 4-130 (AFGEVNQLGG…SSISRILRNK (127 aa)). Residues 7 to 63 (EVNQLGGVFVNGRPLPNAIRLRIVELAQLGIRPCDISRQLRVSHGCVSKILARYNET) are PAI subdomain. The RED subdomain stretch occupies residues 82 to 130 (TVVKHIRTYKQRDPGIFAWEIRDRLLADGVCDKYNVPSVSSISRILRNK). Residues 168–189 (AAAAKVPTPPGVPAIPGSVALP) form an interaction with KDM5B region.

As to quaternary structure, interacts with KDM5B. In terms of tissue distribution, in the embryo, expressed in pharyngeal pouches and derivatives, developing vertebral column, tail, head and limbs.

The protein localises to the nucleus. Its function is as follows. Transcription factor required for normal development of thymus, parathyroid glands, ultimobranchial bodies, teeth, skeletal elements of skull and larynx as well as distal limbs. This Mus musculus (Mouse) protein is Paired box protein Pax-9 (Pax9).